The following is a 313-amino-acid chain: Methionyl-tRNA formyltransferase (313 aa).

109–112 (SLLP) lines the (6S)-5,6,7,8-tetrahydrofolate pocket.

This sequence belongs to the Fmt family.

It carries out the reaction L-methionyl-tRNA(fMet) + (6R)-10-formyltetrahydrofolate = N-formyl-L-methionyl-tRNA(fMet) + (6S)-5,6,7,8-tetrahydrofolate + H(+). Its function is as follows. Attaches a formyl group to the free amino group of methionyl-tRNA(fMet). The formyl group appears to play a dual role in the initiator identity of N-formylmethionyl-tRNA by promoting its recognition by IF2 and preventing the misappropriation of this tRNA by the elongation apparatus. This Thermotoga maritima (strain ATCC 43589 / DSM 3109 / JCM 10099 / NBRC 100826 / MSB8) protein is Methionyl-tRNA formyltransferase.